Reading from the N-terminus, the 176-residue chain is MLQFLNRCSRGRGAWLLMALTAFLLELTALYFQHIMLLQPCVMCIYERVALFGILGASLLGAIAPRSPLRYLAIAVWIYSAWKGVQLAWAHTMLQLNPSPFNTCDFFVNFPSWLPLDKWLPAVFAASGDCSERQWQFMSLEMPQWLVGIFAAYLVIAVLVLISQFVKPKRRDLFGR.

The Cytoplasmic segment spans residues Met1–Ala14. Residues Trp15–Tyr31 traverse the membrane as a helical segment. The Periplasmic portion of the chain corresponds to Phe32–Val49. Cys41 and Cys44 are joined by a disulfide. A helical transmembrane segment spans residues Ala50–Pro65. The Cytoplasmic portion of the chain corresponds to Arg66 to Tyr71. The chain crosses the membrane as a helical span at residues Leu72 to Trp89. Residues Ala90 to Gln144 are Periplasmic-facing. Cys104 and Cys130 are oxidised to a cystine. Residues Trp145–Ser163 form a helical membrane-spanning segment. Residues Gln164–Arg176 lie on the Cytoplasmic side of the membrane.

The protein belongs to the DsbB family.

The protein localises to the cell inner membrane. In terms of biological role, required for disulfide bond formation in some periplasmic proteins. Acts by oxidizing the DsbA protein. In Yersinia pestis bv. Antiqua (strain Nepal516), this protein is Disulfide bond formation protein B.